Consider the following 425-residue polypeptide: 5-aminovalerate aminotransferase DavT (425 aa).

Pyridoxal 5'-phosphate contacts are provided by residues 112–113 (GS), tyrosine 139, and 240–243 (DEVQ). An N6-(pyridoxal phosphate)lysine modification is found at lysine 269. Threonine 298 lines the pyridoxal 5'-phosphate pocket.

It belongs to the class-III pyridoxal-phosphate-dependent aminotransferase family. Pyridoxal 5'-phosphate serves as cofactor.

The enzyme catalyses 5-aminopentanoate + 2-oxoglutarate = 5-oxopentanoate + L-glutamate. In terms of biological role, catalyzes the conversion of 5-aminovalerate to 5-oxopentanoate. This Pseudomonas putida (strain ATCC 47054 / DSM 6125 / CFBP 8728 / NCIMB 11950 / KT2440) protein is 5-aminovalerate aminotransferase DavT (davT).